The chain runs to 307 residues: Acyl transferase (307 aa).

Active-site charge relay system residues include Ser-116, Asp-213, and His-243.

The protein belongs to the LuxD family.

The protein operates within lipid metabolism; fatty acid reduction for biolumincescence. Its function is as follows. Acyl transferase is part of the fatty acid reductase system required for aldehyde biosynthesis; it produces fatty acids for the luminescent reaction. The sequence is that of Acyl transferase from Photorhabdus luminescens (Xenorhabdus luminescens).